A 421-amino-acid polypeptide reads, in one-letter code: UDP-N-acetylglucosamine 1-carboxyvinyltransferase (421 aa).

22-23 (KN) provides a ligand contact to phosphoenolpyruvate. Arginine 92 provides a ligand contact to UDP-N-acetyl-alpha-D-glucosamine. Catalysis depends on aspartate 116, which acts as the Proton donor. Residues 121 to 125 (RPIDQ), aspartate 307, and isoleucine 330 each bind UDP-N-acetyl-alpha-D-glucosamine.

The protein belongs to the EPSP synthase family. MurA subfamily.

It localises to the cytoplasm. The catalysed reaction is phosphoenolpyruvate + UDP-N-acetyl-alpha-D-glucosamine = UDP-N-acetyl-3-O-(1-carboxyvinyl)-alpha-D-glucosamine + phosphate. Its pathway is cell wall biogenesis; peptidoglycan biosynthesis. Functionally, cell wall formation. Adds enolpyruvyl to UDP-N-acetylglucosamine. The protein is UDP-N-acetylglucosamine 1-carboxyvinyltransferase of Lactobacillus johnsonii (strain CNCM I-12250 / La1 / NCC 533).